Here is a 103-residue protein sequence, read N- to C-terminus: Large ribosomal subunit protein uL22c (103 aa).

This sequence belongs to the universal ribosomal protein uL22 family. As to quaternary structure, part of the 50S ribosomal subunit.

The protein localises to the plastid. It is found in the chloroplast. This protein binds specifically to 23S rRNA. Its function is as follows. The globular domain of the protein is located near the polypeptide exit tunnel on the outside of the subunit, while an extended beta-hairpin is found that lines the wall of the exit tunnel in the center of the 70S ribosome. In Cyanidium caldarium (Red alga), this protein is Large ribosomal subunit protein uL22c (rpl22).